Here is a 260-residue protein sequence, read N- to C-terminus: Uroplakin-1b (260 aa).

The Cytoplasmic segment spans residues 1-15 (MAKDDSTVRCFQGLL). Residues 16–36 (IFGHVIVGMCGIALTAECIFF) form a helical membrane-spanning segment. Residues 37-59 (VSDQHSLYPLLEATNNDDIFGAA) are Extracellular-facing. The helical transmembrane segment at 60–80 (WIGMFVGICLFCLSVLAIVGI) threads the bilayer. Topologically, residues 81–86 (MKSNRK) are cytoplasmic. The helical transmembrane segment at 87-107 (ILLAYFIMMFIVYGFEVASCI) threads the bilayer. At 108 to 229 (TAATQRDFFT…ELISGPMDRH (122 aa)) the chain is on the extracellular side. A helical membrane pass occupies residues 230–250 (AWGVAWFGFAILCWTFWVLLG). The Cytoplasmic portion of the chain corresponds to 251 to 260 (TMFYWSRIEY).

It belongs to the tetraspanin (TM4SF) family. In terms of assembly, heterodimer with uroplakin-3A (UPK3A) or uroplakin-3B (UPK3B). In terms of processing, N-glycosylated with high-mannose oligosaccharides. In terms of tissue distribution, bladder epithelium.

It localises to the membrane. Functionally, component of the asymmetric unit membrane (AUM); a highly specialized biomembrane elaborated by terminally differentiated urothelial cells. May play an important role in normal bladder epithelial physiology, possibly in regulating membrane permeability of superficial umbrella cells or in stabilizing the apical membrane through AUM/cytoskeletal interactions. The sequence is that of Uroplakin-1b (Upk1b) from Mus musculus (Mouse).